We begin with the raw amino-acid sequence, 572 residues long: Glutathione hydrolase 1 (572 aa).

The signal sequence occupies residues 1–22; the sequence is MSLVRTVTIVLFIIAFLQNAAA. Residue Arg99 coordinates L-glutamate. 2 N-linked (GlcNAc...) asparagine glycosylation sites follow: Asn171 and Asn222. Thr368 functions as the Nucleophile in the catalytic mechanism. L-glutamate contacts are provided by residues Thr386, Asn388, Glu407, Asp410, 440-441, and 461-462; these read SS and GG. N-linked (GlcNAc...) asparagine glycosylation occurs at Asn505. The disordered stretch occupies residues 552-572; the sequence is GGRSELVAVSDPRKGGFPSGY.

It belongs to the gamma-glutamyltransferase family. Expressed in embryo, roots and leaves. In mature plants, expression is restricted to vascular tissues of roots, leaves, flowers and siliques.

It localises to the secreted. The protein localises to the extracellular space. The protein resides in the apoplast. It catalyses the reaction an N-terminal (5-L-glutamyl)-[peptide] + an alpha-amino acid = 5-L-glutamyl amino acid + an N-terminal L-alpha-aminoacyl-[peptide]. The catalysed reaction is glutathione + H2O = L-cysteinylglycine + L-glutamate. It carries out the reaction an S-substituted glutathione + H2O = an S-substituted L-cysteinylglycine + L-glutamate. Its pathway is sulfur metabolism; glutathione metabolism. Functionally, may play a role in preventing oxidative stress by metabolizing extracellular oxidized glutathione (GSSG). This Arabidopsis thaliana (Mouse-ear cress) protein is Glutathione hydrolase 1 (GGT1).